A 514-amino-acid polypeptide reads, in one-letter code: Peptide chain release factor 3 (514 aa).

The 261-residue stretch at 8-268 (KKRRTFAIIS…TFLEFAPEPH (261 aa)) folds into the tr-type G domain. Residues 17–24 (SHPDAGKT), 85–89 (DTPGH), and 139–142 (NKLD) each bind GTP.

Belongs to the TRAFAC class translation factor GTPase superfamily. Classic translation factor GTPase family. PrfC subfamily.

The protein resides in the cytoplasm. Its function is as follows. Increases the formation of ribosomal termination complexes and stimulates activities of RF-1 and RF-2. It binds guanine nucleotides and has strong preference for UGA stop codons. It may interact directly with the ribosome. The stimulation of RF-1 and RF-2 is significantly reduced by GTP and GDP, but not by GMP. The polypeptide is Peptide chain release factor 3 (Streptococcus pyogenes serotype M1).